The chain runs to 137 residues: Small ribosomal subunit protein uS12 (137 aa).

Disordered regions lie at residues Met1–Ser21 and Val34–Lys57. At Asp102 the chain carries 3-methylthioaspartic acid.

It belongs to the universal ribosomal protein uS12 family. Part of the 30S ribosomal subunit. Contacts proteins S8 and S17. May interact with IF1 in the 30S initiation complex.

With S4 and S5 plays an important role in translational accuracy. Functionally, interacts with and stabilizes bases of the 16S rRNA that are involved in tRNA selection in the A site and with the mRNA backbone. Located at the interface of the 30S and 50S subunits, it traverses the body of the 30S subunit contacting proteins on the other side and probably holding the rRNA structure together. The combined cluster of proteins S8, S12 and S17 appears to hold together the shoulder and platform of the 30S subunit. The polypeptide is Small ribosomal subunit protein uS12 (Streptococcus uberis (strain ATCC BAA-854 / 0140J)).